Consider the following 375-residue polypeptide: Queuine tRNA-ribosyltransferase (375 aa).

Asp89 serves as the catalytic Proton acceptor. Substrate contacts are provided by residues Asp89–Phe93, Asp143, Gln187, and Gly214. The segment at Gly245–Asp251 is RNA binding. Asp264 acts as the Nucleophile in catalysis. The interval Thr269–Arg273 is RNA binding; important for wobble base 34 recognition. Residues Cys302, Cys304, Cys307, and His333 each coordinate Zn(2+).

It belongs to the queuine tRNA-ribosyltransferase family. In terms of assembly, homodimer. Within each dimer, one monomer is responsible for RNA recognition and catalysis, while the other monomer binds to the replacement base PreQ1. Zn(2+) is required as a cofactor.

It carries out the reaction 7-aminomethyl-7-carbaguanine + guanosine(34) in tRNA = 7-aminomethyl-7-carbaguanosine(34) in tRNA + guanine. The protein operates within tRNA modification; tRNA-queuosine biosynthesis. Catalyzes the base-exchange of a guanine (G) residue with the queuine precursor 7-aminomethyl-7-deazaguanine (PreQ1) at position 34 (anticodon wobble position) in tRNAs with GU(N) anticodons (tRNA-Asp, -Asn, -His and -Tyr). Catalysis occurs through a double-displacement mechanism. The nucleophile active site attacks the C1' of nucleotide 34 to detach the guanine base from the RNA, forming a covalent enzyme-RNA intermediate. The proton acceptor active site deprotonates the incoming PreQ1, allowing a nucleophilic attack on the C1' of the ribose to form the product. After dissociation, two additional enzymatic reactions on the tRNA convert PreQ1 to queuine (Q), resulting in the hypermodified nucleoside queuosine (7-(((4,5-cis-dihydroxy-2-cyclopenten-1-yl)amino)methyl)-7-deazaguanosine). In Salmonella arizonae (strain ATCC BAA-731 / CDC346-86 / RSK2980), this protein is Queuine tRNA-ribosyltransferase.